We begin with the raw amino-acid sequence, 521 residues long: Ribonuclease Y (521 aa).

The chain crosses the membrane as a helical span at residues 1–21 (MFFIEHPFVYLGLDLIVGCLI). Positions 211 to 271 (TVSMVPLPSD…VRREVARLAL (61 aa)) constitute a KH domain. Residues 337 to 430 (VLQHSLEVAF…VQAADALSGA (94 aa)) enclose the HD domain.

Belongs to the RNase Y family.

The protein localises to the cell membrane. Endoribonuclease that initiates mRNA decay. This is Ribonuclease Y from Desulfotalea psychrophila (strain LSv54 / DSM 12343).